We begin with the raw amino-acid sequence, 380 residues long: Flap endonuclease 1 (380 aa).

The segment at 1–104 is N-domain; that stretch reads MGIHGLAKLI…GELEKRVERR (104 aa). Mg(2+) is bound at residue D34. Positions 47 and 70 each coordinate DNA. Mg(2+)-binding residues include D86, E158, E160, D179, and D181. Positions 122-253 are I-domain; the sequence is NIDKFSKRLV…KRAIDLIKQH (132 aa). E158 contacts DNA. DNA is bound by residues G231 and D233. Residue D233 participates in Mg(2+) binding. Positions 336–344 are interaction with PCNA; sequence TQGRLDTFF. Residues 346-380 are disordered; that stretch reads VTGSISSKRKEPETKGSAKKKQKTSATPGKFKKGK.

It belongs to the XPG/RAD2 endonuclease family. FEN1 subfamily. Interacts with PCNA. Three molecules of fen1 bind to one PCNA trimer with each molecule binding to one PCNA monomer. PCNA stimulates the nuclease activity without altering cleavage specificity. Requires Mg(2+) as cofactor. Phosphorylated. Phosphorylation upon DNA damage induces relocalization to the nuclear plasma.

It is found in the nucleus. It localises to the nucleolus. The protein resides in the nucleoplasm. Its subcellular location is the mitochondrion. Functionally, structure-specific nuclease with 5'-flap endonuclease and 5'-3' exonuclease activities involved in DNA replication and repair. During DNA replication, cleaves the 5'-overhanging flap structure that is generated by displacement synthesis when DNA polymerase encounters the 5'-end of a downstream Okazaki fragment. It enters the flap from the 5'-end and then tracks to cleave the flap base, leaving a nick for ligation. Also involved in the long patch base excision repair (LP-BER) pathway, by cleaving within the apurinic/apyrimidinic (AP) site-terminated flap. Acts as a genome stabilization factor that prevents flaps from equilibrating into structures that lead to duplications and deletions. Also possesses 5'-3' exonuclease activity on nicked or gapped double-stranded DNA, and exhibits RNase H activity. Also involved in replication and repair of rDNA and in repairing mitochondrial DNA. This chain is Flap endonuclease 1 (fen1), found in Danio rerio (Zebrafish).